A 367-amino-acid polypeptide reads, in one-letter code: Probable thylakoidal processing peptidase 2, chloroplastic (367 aa).

The N-terminal 68 residues, 1-68, are a transit peptide targeting the chloroplast; sequence MAIRVTFTYS…NTWGPSSGPR (68 aa). Positions 53–72 are disordered; it reads DKSPGSNTWGPSSGPRARPA. A compositionally biased stretch (low complexity) spans 62–72; the sequence is GPSSGPRARPA. The chain crosses the membrane as a helical span at residues 185–205; sequence EDAKAAFTAVTVSLLFRSALA. The Lumenal, thylakoid portion of the chain corresponds to 206 to 367; sequence EPKSIPSTSM…VSQKRAVDVS (162 aa). The active site involves serine 214.

This sequence belongs to the peptidase S26 family.

The protein resides in the plastid. It localises to the chloroplast thylakoid membrane. It catalyses the reaction Cleavage of hydrophobic, N-terminal signal or leader sequences from secreted and periplasmic proteins.. Cleaves the thylakoid-transfer domain from a chloroplast protein. The sequence is that of Probable thylakoidal processing peptidase 2, chloroplastic (TPP2) from Arabidopsis thaliana (Mouse-ear cress).